The sequence spans 163 residues: Transcription elongation factor GreA (163 aa).

Residues 45 to 65 (NAEYHAAREKQAFIEARINEL) adopt a coiled-coil conformation.

The protein belongs to the GreA/GreB family.

Functionally, necessary for efficient RNA polymerase transcription elongation past template-encoded arresting sites. The arresting sites in DNA have the property of trapping a certain fraction of elongating RNA polymerases that pass through, resulting in locked ternary complexes. Cleavage of the nascent transcript by cleavage factors such as GreA or GreB allows the resumption of elongation from the new 3'terminus. GreA releases sequences of 2 to 3 nucleotides. The chain is Transcription elongation factor GreA from Helicobacter hepaticus (strain ATCC 51449 / 3B1).